We begin with the raw amino-acid sequence, 554 residues long: MPTVDDVLEQVGEFGWFQKRTFLFLCLISAILAPIYLGIVFLGFTPDHRCRSPGVDELSQRCGWSPEEELNYTVPGLGATDGAFVRQCMRYEVDWNQSSLGCVDPLASLAPNRSHLPLGPCQHGWVYDTPGSSIVTEFNLVCADAWKVDLFQSCVNLGFFLGSLGVGYIADRFGRKLCLLLTTLINAVSGVLTAVAPDYTSMLLFRLLQGLVSKGSWMSGYTLITEFVGSGYRRTVAILYQVAFSVGLVALSGVAYAIPNWRWLQLTVSLPTFLCLFYYWCVPESPRWLLSQKRNTDAVKIMDNIAQKNGKLPPADLKMLSLDEDVTEKLSPSLADLFRTPNLRKHTFILMFLWFTCSVLYQGLILHMGATGGNVYLDFFYSSLVEFPAAFVILVTIDRVGRIYPMAASNLAAGVASVILIFVPQDLHWLTIVLSCVGRMGATIVLQMICLVNAELYPTFVRNLGVMVCSALCDVGGIITPFMVFRLMEVWQPLPLIVFGVLGLLAGGMTLLLPETKGVALPETIEDAENLRRKAKPKESKIYLQVQTSELKGP.

The Cytoplasmic segment spans residues 1–21 (MPTVDDVLEQVGEFGWFQKRT). Residues 22–42 (FLFLCLISAILAPIYLGIVFL) form a helical membrane-spanning segment. Residues 43–149 (GFTPDHRCRS…LVCADAWKVD (107 aa)) are Extracellular-facing. Residue Asn-71 is glycosylated (N-linked (GlcNAc...) asparagine). The chain crosses the membrane as a helical span at residues 150-170 (LFQSCVNLGFFLGSLGVGYIA). Residues 171–176 (DRFGRK) are Cytoplasmic-facing. A helical transmembrane segment spans residues 177–197 (LCLLLTTLINAVSGVLTAVAP). The Extracellular portion of the chain corresponds to 198-206 (DYTSMLLFR). The chain crosses the membrane as a helical span at residues 207–229 (LLQGLVSKGSWMSGYTLITEFVG). Over 230–237 (SGYRRTVA) the chain is Cytoplasmic. Residues 238-258 (ILYQVAFSVGLVALSGVAYAI) traverse the membrane as a helical segment. The Extracellular portion of the chain corresponds to 259–262 (PNWR). The chain crosses the membrane as a helical span at residues 263–283 (WLQLTVSLPTFLCLFYYWCVP). The Proline-rich sequence motif lies at 283 to 287 (PESPR). The Cytoplasmic segment spans residues 284 to 347 (ESPRWLLSQK…FRTPNLRKHT (64 aa)). Ser-333 carries the phosphoserine modification. The helical transmembrane segment at 348-368 (FILMFLWFTCSVLYQGLILHM) threads the bilayer. Residues 369–374 (GATGGN) are Extracellular-facing. The helical transmembrane segment at 375–395 (VYLDFFYSSLVEFPAAFVILV) threads the bilayer. Topologically, residues 396 to 402 (TIDRVGR) are cytoplasmic. A helical transmembrane segment spans residues 403–423 (IYPMAASNLAAGVASVILIFV). Topologically, residues 424–431 (PQDLHWLT) are extracellular. Residues 432 to 452 (IVLSCVGRMGATIVLQMICLV) traverse the membrane as a helical segment. At 453-464 (NAELYPTFVRNL) the chain is on the cytoplasmic side. A helical transmembrane segment spans residues 465 to 485 (GVMVCSALCDVGGIITPFMVF). Topologically, residues 486-492 (RLMEVWQ) are extracellular. The chain crosses the membrane as a helical span at residues 493 to 513 (PLPLIVFGVLGLLAGGMTLLL). Over 514 to 554 (PETKGVALPETIEDAENLRRKAKPKESKIYLQVQTSELKGP) the chain is Cytoplasmic.

Belongs to the major facilitator (TC 2.A.1) superfamily. Organic cation transporter (TC 2.A.1.19) family. In terms of processing, phosphorylated. Expressed in kidney, liver and intestine.

Its subcellular location is the basolateral cell membrane. It is found in the apical cell membrane. The protein resides in the lateral cell membrane. It localises to the basal cell membrane. The catalysed reaction is 1-methylnicotinamide(out) = 1-methylnicotinamide(in). It carries out the reaction dopamine(out) = dopamine(in). The enzyme catalyses serotonin(out) = serotonin(in). It catalyses the reaction (R)-adrenaline(out) = (R)-adrenaline(in). The catalysed reaction is (R)-noradrenaline(out) = (R)-noradrenaline(in). It carries out the reaction histamine(out) = histamine(in). The enzyme catalyses guanidine(out) = guanidine(in). It catalyses the reaction choline(out) = choline(in). The catalysed reaction is acetylcholine(in) = acetylcholine(out). It carries out the reaction thiamine(in) = thiamine(out). The enzyme catalyses spermidine(in) = spermidine(out). It catalyses the reaction agmatine(out) = agmatine(in). The catalysed reaction is putrescine(out) = putrescine(in). It carries out the reaction (R)-carnitine(in) = (R)-carnitine(out). The enzyme catalyses O-isobutanoyl-(R)-carnitine(in) = O-isobutanoyl-(R)-carnitine(out). It catalyses the reaction O-acetyl-(R)-carnitine(in) = O-acetyl-(R)-carnitine(out). The catalysed reaction is O-3-hydroxybutanoyl-(R)-carnitine(in) = O-3-hydroxybutanoyl-(R)-carnitine(out). It carries out the reaction O-propanoyl-(R)-carnitine(in) = O-propanoyl-(R)-carnitine(out). The enzyme catalyses O-butanoyl-(R)-carnitine(in) = O-butanoyl-(R)-carnitine(out). It catalyses the reaction O-2-methylbutanoyl-(R)-carnitine(in) = O-2-methylbutanoyl-(R)-carnitine(out). The catalysed reaction is O-3-methylbutanoyl-(R)-carnitine(in) = O-3-methylbutanoyl-(R)-carnitine(out). It carries out the reaction O-hexanoyl-(R)-carnitine(in) = O-hexanoyl-(R)-carnitine(out). The enzyme catalyses L-histidyl-L-proline diketopiperazine(in) = L-histidyl-L-proline diketopiperazine(out). It catalyses the reaction (R)-salsolinol(in) = (R)-salsolinol(out). The catalysed reaction is prostaglandin F2alpha(out) = prostaglandin F2alpha(in). It carries out the reaction prostaglandin E2(out) = prostaglandin E2(in). Phosphorylation of the transporter leads to changes in its substrate affinity, resulting in a regulation of the transport activity. In contrast with rat ortholog, ASP uptake is inhibited by protein kinase A (PKA) and C (PKC) activation. ASP uptake is also endogenously activated by calmodulin, the calmodulin-dependent kinase II and LCK tyrosine kinase. Inhibited by cGMP, most likely through a cGMP-binding protein that interacts with OCT1. Functionally, electrogenic voltage-dependent transporter that mediates the transport of a variety of organic cations such as endogenous bioactive amines, cationic drugs and xenobiotics. Functions as a pH- and Na(+)-independent, bidirectional transporter. Cation cellular uptake or release is driven by the electrochemical potential (i.e. membrane potential and concentration gradient) and substrate selectivity. Hydrophobicity is a major requirement for recognition in polyvalent substrates and inhibitors. Primarily expressed in the basolateral membrane of hepatocytes and proximal tubules and involved in the uptake and disposition of cationic compounds from the blood by hepatic and renal clearance. Most likely functions as an uptake carrier in enterocytes contributing to the intestinal elimination of organic cations from the systemic circulation. Transports endogenous monoamines such as N-1-methylnicotinamide (NMN), guanidine, neurotransmitters dopamine, serotonin, noradrenaline, adrenaline and histamine, and quaternary ammonium compound such as choline. Also transports natural polyamines such as spermidine, agmatine and putrescine at low affinity, but relatively high turnover. Involved in the hepatic and intestinal uptake of the vitamin B1/thiamine, hence regulating hepatic lipid and energy metabolism. Contributes to the influx and efflux of fatty acid carriers carnitines and acylcarnitines across the basolateral membrane of hepatocytes, from the liver to the systemic circulation and inversely and may be involved in regulating the systemic availability of hepatic acylcarnitines. Also capable of transporting non-amine endogenous compounds such as prostaglandin E2 (PGE2) and prostaglandin F2-alpha (PGF2-alpha). May contribute to the transport of cationic compounds in testes across the blood-testis-barrier. Also mediates the uptake of xenobiotics tributylmethylammonium (TBuMA), quinidine, N-methyl-quinine (NMQ), N-methyl-quinidine (NMQD) N-(4,4-azo-n-pentyl)-quinuclidine (APQ), azidoprocainamide methoiodide (AMP), N-(4,4-azo-n-pentyl)-21-deoxyajmalinium (APDA) and 4-(4-(dimethylamino)styryl)-N-methylpyridinium (ASP). The sequence is that of Solute carrier family 22 member 1 (SLC22A1) from Oryctolagus cuniculus (Rabbit).